An 872-amino-acid chain; its full sequence is MRKSYSPSDIESVVQKHWYKNKTFAVIEDSNKEKYYCLSMIPYPSGNLHMGHVRNYTIGDVISRYQRMLGKNVLQPIGWDAFGLPAEHAAIKNNTDPSIWTYSNINYMKSQLQSLGFAYDWNRELITCHPDYYRWEQWFFTVLYKKGLVYKKTASVNWCSYHKTVLANEQVTNNCCWRCHTPVKYKRIPQWFIRITNYADQLLHGLDQLTHWPEQVKIMQRNWIGRSKGVNVTFRIENSNDTLTIYMTRLDIFMGITYLVISTDHPIALQVAKTDLNVAHFIQKNDDFYTKLNKKNVFYFEKMGMPTHIYAIHPITNSKLPIWVANFVIPMECDGMGAAISIPAHNQQDWEFAYKYNLPIKPVIKNLDAIEPNIAMQAQETTCDGILFNSGEFDGLSSCTASNAIVKSLIARGVAQYKVNYRLKDWGISRQRYWGVPIPMVTLSNGVVKPVLLDRLPVILPKNMSTIHRSNDGYVDNSLKMYPNWIQTTYKGQAAIRDTDTFDTFMESSWYYARYTCPRYNDAMLNVHAANYWLPVDQYIGGIEHAIMHLLYFRFYHKLMRDEGLVYSDEPAIRLLCQGMVLADSFYYVSPNGQHIWVDPTHVTIKRDRIGGIVKAIDKDGRDLIYDGMCKMSKSKNNGIDPNIIIEKYGADAVRFFIMFAAPIEAPLEWKESGIEGAQRFLKRIWNLIYHHIQDGPVDALSVVILNHAQKFIRYNVHKTIEKVTDDIDRRQSFNTALSAIMKLVKKLYNAPKTSMQDRAVLQEALLVIVRLLYPFTPHISFILWKALGGSEDIDNATWPIVDTQAIQNDRTLVLVQINGKMRHKVFAPLNSDKNVVYKLLETEGVLNKYLIGKKINNIIYVPNRVINIIAK.

The 'HIGH' region signature appears at 42-52 (PYPSGNLHMGH). Residues 631–635 (KMSKS) carry the 'KMSKS' region motif. Lys634 contacts ATP.

It belongs to the class-I aminoacyl-tRNA synthetase family.

It is found in the cytoplasm. It carries out the reaction tRNA(Leu) + L-leucine + ATP = L-leucyl-tRNA(Leu) + AMP + diphosphate. The sequence is that of Leucine--tRNA ligase from Blochmanniella pennsylvanica (strain BPEN).